Reading from the N-terminus, the 249-residue chain is Segregation and condensation protein A (249 aa).

The protein belongs to the ScpA family. As to quaternary structure, component of a cohesin-like complex composed of ScpA, ScpB and the Smc homodimer, in which ScpA and ScpB bind to the head domain of Smc. The presence of the three proteins is required for the association of the complex with DNA.

It localises to the cytoplasm. Its function is as follows. Participates in chromosomal partition during cell division. May act via the formation of a condensin-like complex containing Smc and ScpB that pull DNA away from mid-cell into both cell halves. In Listeria monocytogenes serotype 4a (strain HCC23), this protein is Segregation and condensation protein A.